The sequence spans 188 residues: Ribosomal RNA small subunit methyltransferase G (188 aa).

Residues G69, F74, 119-120 (VQ), and R134 contribute to the S-adenosyl-L-methionine site.

It belongs to the methyltransferase superfamily. RNA methyltransferase RsmG family.

It localises to the cytoplasm. It carries out the reaction guanosine(527) in 16S rRNA + S-adenosyl-L-methionine = N(7)-methylguanosine(527) in 16S rRNA + S-adenosyl-L-homocysteine. Specifically methylates the N7 position of guanine in position 527 of 16S rRNA. This chain is Ribosomal RNA small subunit methyltransferase G, found in Campylobacter jejuni subsp. doylei (strain ATCC BAA-1458 / RM4099 / 269.97).